A 421-amino-acid chain; its full sequence is MDKLIITGGHRLDGEIRISGAKNAALPILAATLLADTPVTVCNLPHLHDITTMIELFGRMGVQPVIDEKLSVEMDASSIKTLVAPYELVKTMRASILVLGPMLARFGEAEVALPGGCAIGSRPVDLHIRGLEALGAQIEMDGGYIKARAPAGGLRGGHFFFDIVSVTGTENIMMAAALASGRTVLENAAREPEVVDLANFLIGMGAQIKGAGTDTVVIEGVKRLGGGRYSVMPDRIETGTYLVAAVATRGRVKLKDTDPTILEAVLLKLEEAGAQIDTGNNWISLDMKGNRPKAVNVRTAPYPAFPTDMQAQFISMNAVAEGTGTVIETVFENRFMHVYEMNRMGARILVEGNTAIVTGVPCLKGAPVMATDLRASASLVIAGLVAEGDTLIDRIYHIDRGYECIEEKLQLLGAKIRRIPG.

Phosphoenolpyruvate is bound at residue lysine 22–asparagine 23. Position 93 (arginine 93) interacts with UDP-N-acetyl-alpha-D-glucosamine. Cysteine 117 acts as the Proton donor in catalysis. Residue cysteine 117 is modified to 2-(S-cysteinyl)pyruvic acid O-phosphothioketal. UDP-N-acetyl-alpha-D-glucosamine-binding positions include arginine 122–leucine 126, aspartate 308, and valine 330.

This sequence belongs to the EPSP synthase family. MurA subfamily.

The protein resides in the cytoplasm. The enzyme catalyses phosphoenolpyruvate + UDP-N-acetyl-alpha-D-glucosamine = UDP-N-acetyl-3-O-(1-carboxyvinyl)-alpha-D-glucosamine + phosphate. Its pathway is cell wall biogenesis; peptidoglycan biosynthesis. Functionally, cell wall formation. Adds enolpyruvyl to UDP-N-acetylglucosamine. In Azotobacter vinelandii (strain DJ / ATCC BAA-1303), this protein is UDP-N-acetylglucosamine 1-carboxyvinyltransferase.